Reading from the N-terminus, the 905-residue chain is Isoleucine--tRNA ligase (905 aa).

Residues 56 to 66 (PYANGNIHMGT) carry the 'HIGH' region motif. Residue E563 participates in L-isoleucyl-5'-AMP binding. The 'KMSKS' region motif lies at 604–608 (KMSKS). An ATP-binding site is contributed by K607.

This sequence belongs to the class-I aminoacyl-tRNA synthetase family. IleS type 1 subfamily. Monomer.

The protein localises to the cytoplasm. It catalyses the reaction tRNA(Ile) + L-isoleucine + ATP = L-isoleucyl-tRNA(Ile) + AMP + diphosphate. Functionally, catalyzes the attachment of isoleucine to tRNA(Ile). As IleRS can inadvertently accommodate and process structurally similar amino acids such as valine, to avoid such errors it has two additional distinct tRNA(Ile)-dependent editing activities. One activity is designated as 'pretransfer' editing and involves the hydrolysis of activated Val-AMP. The other activity is designated 'posttransfer' editing and involves deacylation of mischarged Val-tRNA(Ile). The polypeptide is Isoleucine--tRNA ligase (Pelagibacter ubique (strain HTCC1062)).